The sequence spans 296 residues: Thioredoxin-related transmembrane protein 2 (296 aa).

The signal sequence occupies residues 1–48; the sequence is MAVLAPLIALVYSVPRLSRWLAQPYYLLSALLSAAFLLVRKLPPLCHG. Residues 49–102 lie on the Extracellular side of the membrane; the sequence is LPTQREDGNPCDFDWREVEILMFLSAIVMMKNRRSITVEQHIGNIFMFSKVANA. A helical membrane pass occupies residues 103 to 125; that stretch reads ILFFRLDIRMGLLYITLCIVFLM. The Thioredoxin domain occupies 114–269; the sequence is LLYITLCIVF…LYQRAKKLSK (156 aa). Over 126-296 the chain is Cytoplasmic; that stretch reads TCKPPLYMGP…VSDGESKKDK (171 aa). Residues S211, S243, and S288 each carry the phosphoserine modification. A disordered region spans residues 269–296; sequence KAGDNIPEEQPVAPTPTRVSDGESKKDK. Positions 293–296 match the Di-lysine motif motif; sequence KKDK.

In terms of assembly, monomer. Homodimer; disulfide-linked. Occurs in both reduced and oxidized monomeric form. Oxidative conditions increase homodimerization. Interacts with CANX. Interacts with ATP2A2.

It is found in the endoplasmic reticulum membrane. Its subcellular location is the mitochondrion membrane. Its function is as follows. Endoplasmic reticulum and mitochondria-associated protein that probably functions as a regulator of cellular redox state and thereby regulates protein post-translational modification, protein folding and mitochondrial activity. Indirectly regulates neuronal proliferation, migration, and organization in the developing brain. The protein is Thioredoxin-related transmembrane protein 2 (TMX2) of Macaca fascicularis (Crab-eating macaque).